The primary structure comprises 202 residues: Protein-methionine-sulfoxide reductase heme-binding subunit MsrQ (202 aa).

Transmembrane regions (helical) follow at residues 8-28, 42-62, 75-95, 110-130, 147-167, and 169-189; these read LAVF…AWIF, LGLG…LQKL, LGLW…VFIL, PYII…ITSN, LVYL…RADL, and EWTL…PSIA.

It belongs to the MsrQ family. Heterodimer of a catalytic subunit (MsrP) and a heme-binding subunit (MsrQ). FMN is required as a cofactor. The cofactor is heme b.

Its subcellular location is the cell inner membrane. Part of the MsrPQ system that repairs oxidized periplasmic proteins containing methionine sulfoxide residues (Met-O), using respiratory chain electrons. Thus protects these proteins from oxidative-stress damage caused by reactive species of oxygen and chlorine generated by the host defense mechanisms. MsrPQ is essential for the maintenance of envelope integrity under bleach stress, rescuing a wide series of structurally unrelated periplasmic proteins from methionine oxidation. MsrQ provides electrons for reduction to the reductase catalytic subunit MsrP, using the quinone pool of the respiratory chain. This Pseudomonas aeruginosa (strain ATCC 15692 / DSM 22644 / CIP 104116 / JCM 14847 / LMG 12228 / 1C / PRS 101 / PAO1) protein is Protein-methionine-sulfoxide reductase heme-binding subunit MsrQ.